Here is a 313-residue protein sequence, read N- to C-terminus: Glutathione synthetase (313 aa).

The region spanning 125–309 is the ATP-grasp domain; sequence KLFVMDFTEL…IAAKIWDVIE (185 aa). Position 151 to 207 (151 to 207) interacts with ATP; sequence RAEHGAVVMKPLHGHGGAAVFRVLPQDINFGSLYDMFAVTFREPWVIQRFLPEVKHG. Positions 280 and 282 each coordinate Mg(2+).

The protein belongs to the prokaryotic GSH synthase family. It depends on Mg(2+) as a cofactor. Mn(2+) serves as cofactor.

It catalyses the reaction gamma-L-glutamyl-L-cysteine + glycine + ATP = glutathione + ADP + phosphate + H(+). The protein operates within sulfur metabolism; glutathione biosynthesis; glutathione from L-cysteine and L-glutamate: step 2/2. The sequence is that of Glutathione synthetase from Rhodopseudomonas palustris (strain ATCC BAA-98 / CGA009).